The chain runs to 369 residues: Pyruvate dehydrogenase E1 component subunit alpha (369 aa).

Heterodimer of an alpha and a beta chain. The cofactor is thiamine diphosphate.

The enzyme catalyses N(6)-[(R)-lipoyl]-L-lysyl-[protein] + pyruvate + H(+) = N(6)-[(R)-S(8)-acetyldihydrolipoyl]-L-lysyl-[protein] + CO2. Functionally, the pyruvate dehydrogenase complex catalyzes the overall conversion of pyruvate to acetyl-CoA and CO(2). It contains multiple copies of three enzymatic components: pyruvate dehydrogenase (E1), dihydrolipoamide acetyltransferase (E2) and lipoamide dehydrogenase (E3). The chain is Pyruvate dehydrogenase E1 component subunit alpha (pdhA) from Geobacillus stearothermophilus (Bacillus stearothermophilus).